A 455-amino-acid chain; its full sequence is MSKLFLDELPESLSRKIGTVVRVLPSSLEIFEELYKYALNENSNDRSGRHKKPRIDVSSDLLKTDEISETNTIFKLEGVSVLSPLRKKLDLVFYLSNVDGSPVITLLKGNDRELSIYQLNKNIKMASFLPVPEKPNLIYLFMTYTSCEDNKFSEPVVMTLNKENTLNQFKNLGLLDSNVTDFEKCVEYIRKQAILTGFKISNPFVNSTLVDTDAEKINSFHLQCHRGTKEGTLYFLPDHIIFGFKKPILLFDASDIESITYSSITRLTFNASLVTKDGEKYEFSMIDQTEYAKIDDYVKRKQMKDKSMSEELKAKSKSKGQATDGTADQPSILQEATRQMQDEKKAGVFSDDDEENDQNFEAESDLSDGSGQESSDGAEDGEEAEEDDEEDDEEEDKKGQSALNRDNSFASINGQPEQELQYKEFKEPLELEDIPIEIGNDDDEDDEDGSGVEYD.

S2 carries the N-acetylserine modification. The segment at 2–67 is dimeric region; the sequence is SKLFLDELPE…SSDLLKTDEI (66 aa). PH domains follow at residues 68–200 and 217–301; these read SETN…GFKI and INSF…VKRK. The segment at 68 to 301 is double PH domain; the sequence is SETNTIFKLE…AKIDDYVKRK (234 aa). Over residues 305–314 the composition is skewed to basic and acidic residues; that stretch reads DKSMSEELKA. The segment at 305–455 is disordered; it reads DKSMSEELKA…DEDGSGVEYD (151 aa). The segment covering 319-339 has biased composition (polar residues); that stretch reads KGQATDGTADQPSILQEATRQ. 2 stretches are compositionally biased toward acidic residues: residues 350-366 and 376-395; these read SDDDEENDQNFEAESDL and DGAEDGEEAEEDDEEDDEEE. The segment covering 402-418 has biased composition (polar residues); sequence ALNRDNSFASINGQPEQ. S408 and S411 each carry phosphoserine. Over residues 420–429 the composition is skewed to basic and acidic residues; it reads LQYKEFKEPL. Positions 430 to 455 are enriched in acidic residues; that stretch reads ELEDIPIEIGNDDDEDDEDGSGVEYD. S450 carries the phosphoserine modification.

This sequence belongs to the RTT106 family. Interacts with the SWI/SNF, RSC and HIR complexes. Interacts with RLF2, SIR4, YTA7 and histones H3 and H4.

The protein localises to the nucleus. It is found in the chromosome. Functionally, histones H3 and H4 chaperone involved in the nucleosome formation and heterochromatin silencing. Required for the deposition of H3K56ac-carrying H3-H4 complex onto newly-replicated DNA. Plays a role in the transcriptional regulation of the cell-cycle dependent histone genes by directly recruiting the SWI/SNF and RSC chromatin remodeling complexes to the histone genes in a cell cycle dependent manner. In cooperation with HIR and ASF1, creates a repressive structure at the core histone gene promoter and contributes to their repression outside of S phase. Involved in regulation of Ty1 transposition. This Saccharomyces cerevisiae (strain YJM789) (Baker's yeast) protein is Histone chaperone RTT106 (RTT106).